The following is a 94-amino-acid chain: Long neurotoxin LNTX1 (94 aa).

Residues 1–21 form the signal peptide; it reads MKILLLTLVVVTIMCLDLGYT. 5 disulfides stabilise this stretch: C24–C43, C36–C64, C49–C53, C68–C79, and C80–C85.

Belongs to the three-finger toxin family. Long-chain subfamily. Type II alpha-neurotoxin sub-subfamily. Monomer. In terms of tissue distribution, expressed by the venom gland.

The protein resides in the secreted. Functionally, binds with high affinity to muscular (alpha-1/CHRNA1) and neuronal (alpha-7/CHRNA7) nicotinic acetylcholine receptor (nAChR) and inhibits acetylcholine from binding to the receptor, thereby impairing neuromuscular and neuronal transmission. Recombinant LNTX1 leads to a functional block of the muscle-type acetylcholine receptors. Has a cytotoxic activity. In Ophiophagus hannah (King cobra), this protein is Long neurotoxin LNTX1.